A 310-amino-acid polypeptide reads, in one-letter code: tRNA dimethylallyltransferase (310 aa).

14 to 21 (GPTASGKS) contacts ATP. A substrate-binding site is contributed by 16–21 (TASGKS). Interaction with substrate tRNA stretches follow at residues 39 to 42 (DSMQ) and 163 to 167 (QRIVR).

It belongs to the IPP transferase family. As to quaternary structure, monomer. The cofactor is Mg(2+).

It catalyses the reaction adenosine(37) in tRNA + dimethylallyl diphosphate = N(6)-dimethylallyladenosine(37) in tRNA + diphosphate. Its function is as follows. Catalyzes the transfer of a dimethylallyl group onto the adenine at position 37 in tRNAs that read codons beginning with uridine, leading to the formation of N6-(dimethylallyl)adenosine (i(6)A). The chain is tRNA dimethylallyltransferase from Brucella melitensis biotype 2 (strain ATCC 23457).